Reading from the N-terminus, the 629-residue chain is tRNA uridine 5-carboxymethylaminomethyl modification enzyme MnmG (629 aa).

Residue 13–18 (GGGHAG) participates in FAD binding. An NAD(+)-binding site is contributed by 273 to 287 (GPRYCPSIEDKVVRF).

Belongs to the MnmG family. Homodimer. Heterotetramer of two MnmE and two MnmG subunits. Requires FAD as cofactor.

The protein resides in the cytoplasm. In terms of biological role, NAD-binding protein involved in the addition of a carboxymethylaminomethyl (cmnm) group at the wobble position (U34) of certain tRNAs, forming tRNA-cmnm(5)s(2)U34. This chain is tRNA uridine 5-carboxymethylaminomethyl modification enzyme MnmG, found in Alkalilimnicola ehrlichii (strain ATCC BAA-1101 / DSM 17681 / MLHE-1).